Consider the following 698-residue polypeptide: Elongation factor G (698 aa).

Residues alanine 8–leucine 284 enclose the tr-type G domain. Residues alanine 17–threonine 24, aspartate 81–histidine 85, and asparagine 135–aspartate 138 each bind GTP.

Belongs to the TRAFAC class translation factor GTPase superfamily. Classic translation factor GTPase family. EF-G/EF-2 subfamily.

The protein resides in the cytoplasm. Functionally, catalyzes the GTP-dependent ribosomal translocation step during translation elongation. During this step, the ribosome changes from the pre-translocational (PRE) to the post-translocational (POST) state as the newly formed A-site-bound peptidyl-tRNA and P-site-bound deacylated tRNA move to the P and E sites, respectively. Catalyzes the coordinated movement of the two tRNA molecules, the mRNA and conformational changes in the ribosome. The polypeptide is Elongation factor G (Salinispora tropica (strain ATCC BAA-916 / DSM 44818 / JCM 13857 / NBRC 105044 / CNB-440)).